The primary structure comprises 142 residues: Large ribosomal subunit protein uL13 (142 aa).

It belongs to the universal ribosomal protein uL13 family. Part of the 50S ribosomal subunit.

This protein is one of the early assembly proteins of the 50S ribosomal subunit, although it is not seen to bind rRNA by itself. It is important during the early stages of 50S assembly. The protein is Large ribosomal subunit protein uL13 of Dictyoglomus thermophilum (strain ATCC 35947 / DSM 3960 / H-6-12).